Consider the following 360-residue polypeptide: Small ribosomal subunit protein mS22 (360 aa).

Serine 54 carries the post-translational modification Phosphoserine. Lysine 211 carries the N6-acetyllysine modification.

This sequence belongs to the mitochondrion-specific ribosomal protein mS22 family. In terms of assembly, component of the mitochondrial small ribosomal subunit (mt-SSU). Mature mammalian 55S mitochondrial ribosomes consist of a small (28S) and a large (39S) subunit. The 28S small subunit contains a 12S ribosomal RNA (12S mt-rRNA) and 30 different proteins. The 39S large subunit contains a 16S rRNA (16S mt-rRNA), a copy of mitochondrial valine transfer RNA (mt-tRNA(Val)), which plays an integral structural role, and 52 different proteins.

It is found in the mitochondrion. In Homo sapiens (Human), this protein is Small ribosomal subunit protein mS22 (MRPS22).